A 379-amino-acid polypeptide reads, in one-letter code: MPQDPSTRSSPARLLIPEPRAGRARHAACVLLAVCFVVLFLSGEPLAPIIRSVCTQLAALQLGVLLKGCCCLAEEIFHLHSRHHGSLWQVLCSCFPPRWYLALLLVGGSAYLDPPEDNGHSPRLALTLSCLCQLLVLALGLQKLSAVEVSELTESSKKNVAHGLAWSYYIGYLKVVLPRLKECMEELSRTNPMLRAHRDTWKLHILVPLGCDIWDDLEKADSNIQYLADLPETILTRAGIKRRVYKHSLYVIRDKDNKLRPCVLEFASPLQTLCAMSQDDCAAFSREQRLEQARLFYRSLRDILGSSKECAGLYRLIAYEEPAEPESHFLSGLILWHLQQQQREEYMVQEELPLGTSSVELSLQVSSSDLPQPLRSDCP.

Topologically, residues 1-23 are cytoplasmic; the sequence is MPQDPSTRSSPARLLIPEPRAGR. The helical transmembrane segment at 24–40 threads the bilayer; sequence ARHAACVLLAVCFVVLF. At 41-50 the chain is on the lumenal side; sequence LSGEPLAPII. Residues 51 to 75 form a helical membrane-spanning segment; the sequence is RSVCTQLAALQLGVLLKGCCCLAEE. Residues 76–97 are Cytoplasmic-facing; that stretch reads IFHLHSRHHGSLWQVLCSCFPP. Residues 98–111 form a helical membrane-spanning segment; the sequence is RWYLALLLVGGSAY. The Lumenal portion of the chain corresponds to 112–121; that stretch reads LDPPEDNGHS. The chain crosses the membrane as a helical span at residues 122–139; it reads PRLALTLSCLCQLLVLAL. The Cytoplasmic segment spans residues 140-379; sequence GLQKLSAVEV…LPQPLRSDCP (240 aa). A cyclic dinucleotide-binding domain (CBD) region spans residues 158-345; the sequence is KNVAHGLAWS…WHLQQQQREE (188 aa). Residues Ser-167, Tyr-172, 243-246, and Ser-268 each bind 3',3'-c-di-GMP; that span reads RVYK. 2',3'-cGAMP contacts are provided by residues 167–172, 243–246, and Ser-268; these read SYYIGY and RVYK. A pLxIS motif motif is present at residues 363–366; sequence LQVS. Ser-366 bears the Phosphoserine; by TBK1 mark.

This sequence belongs to the STING family. Homodimer; forms a homodimer in absence of cyclic nucleotide (c-di-GMP or cGAMP). Homotetramer; in presence of cyclic nucleotide (c-di-GMP or cGAMP), forms tetramers and higher-order oligomers through side-by-side packing. Interacts (when phosphorylated) with IRF3; following activation and phosphorylation on the pLxIS motif by TBK1, recruits IRF3. Post-translationally, phosphorylation by TBK1 leads to activation and production of IFN-beta. Following cyclic nucleotide (c-di-GMP or cGAMP)-binding, activation and translocation from the endoplasmic reticulum, STING1 is phosphorylated by TBK1 at Ser-366 in the pLxIS motif. The phosphorylated pLxIS motif constitutes an IRF3-binding motif, leading to recruitment of the transcription factor IRF3 to induce type-I interferons and other cytokines.

Its subcellular location is the endoplasmic reticulum membrane. It is found in the cytoplasm. It localises to the perinuclear region. The protein localises to the endoplasmic reticulum-Golgi intermediate compartment membrane. The protein resides in the golgi apparatus membrane. Its subcellular location is the cytoplasmic vesicle. It is found in the autophagosome membrane. It catalyses the reaction H(+)(in) = H(+)(out). Its function is as follows. Facilitator of innate immune signaling that acts as a sensor of cytosolic DNA from bacteria and viruses and promotes the production of type I interferon (IFN-alpha and IFN-beta). Innate immune response is triggered in response to non-CpG double-stranded DNA from viruses and bacteria delivered to the cytoplasm. Acts by binding cyclic dinucleotides: recognizes and binds cyclic di-GMP (c-di-GMP), a second messenger produced by bacteria, and cyclic GMP-AMP (cGAMP), a messenger produced by CGAS in response to DNA virus in the cytosol. Upon binding of c-di-GMP or cGAMP, STING1 oligomerizes and is able to activate both NF-kappa-B and IRF3 transcription pathways to induce expression of type I interferon and exert a potent anti-viral state. Exhibits 2',3' phosphodiester linkage-specific ligand recognition: can bind both 2'-3' linked cGAMP and 3'-3' linked cGAMP but is preferentially activated by 2'-3' linked cGAMP. In addition to promote the production of type I interferons, plays a direct role in autophagy. Following cGAMP-binding, STING1 buds from the endoplasmic reticulum into COPII vesicles, which then form the endoplasmic reticulum-Golgi intermediate compartment (ERGIC). The ERGIC serves as the membrane source for LC3 lipidation, leading to formation of autophagosomes that target cytosolic DNA or DNA viruses for degradation by the lysosome. Promotes autophagy by acting as a proton channel that directs proton efflux from the Golgi to facilitate LC3 lipidation. The autophagy- and interferon-inducing activities can be uncoupled and autophagy induction is independent of TBK1 phosphorylation. The chain is Stimulator of interferon genes protein from Gallus gallus (Chicken).